Reading from the N-terminus, the 337-residue chain is MVREEVVGSTRALQWKCVESRADSKRLYYGRFILSPLLKGQADTIGIAMRRALLGEIEGTCITRAKSEKVPHEYSTIAGIEESVHEILMNLKEIVLRSNLYGTRDASICVRGPRCVTAQDIISPPSVEVVDTTQHIASLTEPIDLCIGLQIQRDRGYRMKTTKNSQDGSYPIDAVSMPVRNANHSIHSYGNGNQKQEILFLEIWTNGSLTPKEALHEASRNLIDLFIPFLHAEEEDINFEENQNRFTVPPFTFPDRLANLKKNKKEIALKCIFIDQSELPPRTYNCLKRSNIHTLLDLLSNSQEDLMKIEYFRIEDVKQILDTLQKHFAIDLPKNKF.

The segment at 1-233 (MVREEVVGST…DLFIPFLHAE (233 aa)) is alpha N-terminal domain (alpha-NTD). Residues 265 to 337 (KEIALKCIFI…FAIDLPKNKF (73 aa)) are alpha C-terminal domain (alpha-CTD).

The protein belongs to the RNA polymerase alpha chain family. In plastids the minimal PEP RNA polymerase catalytic core is composed of four subunits: alpha, beta, beta', and beta''. When a (nuclear-encoded) sigma factor is associated with the core the holoenzyme is formed, which can initiate transcription.

The protein localises to the plastid. The protein resides in the chloroplast. It catalyses the reaction RNA(n) + a ribonucleoside 5'-triphosphate = RNA(n+1) + diphosphate. DNA-dependent RNA polymerase catalyzes the transcription of DNA into RNA using the four ribonucleoside triphosphates as substrates. This chain is DNA-directed RNA polymerase subunit alpha, found in Acorus calamus (Sweet flag).